Here is a 356-residue protein sequence, read N- to C-terminus: 1-deoxy-D-xylulose 5-phosphate reductoisomerase (356 aa).

The NADPH site is built by Thr7, Gly8, Ser9, Ile10, Gly31, Asn33, and Asn111. Lys112 serves as a coordination point for 1-deoxy-D-xylulose 5-phosphate. Glu113 lines the NADPH pocket. Residue Asp131 coordinates Mn(2+). Residues Ser132, Glu133, Ser155, and His178 each coordinate 1-deoxy-D-xylulose 5-phosphate. Mn(2+) is bound at residue Glu133. Gly184 serves as a coordination point for NADPH. Residues Ser191, Asn196, Lys197, and Glu200 each coordinate 1-deoxy-D-xylulose 5-phosphate. Glu200 is a Mn(2+) binding site.

The protein belongs to the DXR family. Mg(2+) serves as cofactor. Requires Mn(2+) as cofactor.

It carries out the reaction 2-C-methyl-D-erythritol 4-phosphate + NADP(+) = 1-deoxy-D-xylulose 5-phosphate + NADPH + H(+). Its pathway is isoprenoid biosynthesis; isopentenyl diphosphate biosynthesis via DXP pathway; isopentenyl diphosphate from 1-deoxy-D-xylulose 5-phosphate: step 1/6. Its function is as follows. Catalyzes the NADPH-dependent rearrangement and reduction of 1-deoxy-D-xylulose-5-phosphate (DXP) to 2-C-methyl-D-erythritol 4-phosphate (MEP). This chain is 1-deoxy-D-xylulose 5-phosphate reductoisomerase, found in Campylobacter jejuni subsp. jejuni serotype O:6 (strain 81116 / NCTC 11828).